Here is a 100-residue protein sequence, read N- to C-terminus: MIREERLLKVLRSPHVSEKASAAMEKNNTIVLKVAKDATKAEIKAAVQKLFEVEVEDVNTLLVKGKSKRHGQRVGRRSDWKKAYVTLKEGQNLDFIGGAE.

This sequence belongs to the universal ribosomal protein uL23 family. Part of the 50S ribosomal subunit. Contacts protein L29, and trigger factor when it is bound to the ribosome.

In terms of biological role, one of the early assembly proteins it binds 23S rRNA. One of the proteins that surrounds the polypeptide exit tunnel on the outside of the ribosome. Forms the main docking site for trigger factor binding to the ribosome. The protein is Large ribosomal subunit protein uL23 of Yersinia pestis bv. Antiqua (strain Antiqua).